Reading from the N-terminus, the 364-residue chain is Uroporphyrinogen decarboxylase (364 aa).

Substrate is bound by residues 28-32, Asp78, Tyr160, Thr215, and His333; that span reads RQAGR.

This sequence belongs to the uroporphyrinogen decarboxylase family. In terms of assembly, homodimer.

It is found in the cytoplasm. It catalyses the reaction uroporphyrinogen III + 4 H(+) = coproporphyrinogen III + 4 CO2. The protein operates within porphyrin-containing compound metabolism; protoporphyrin-IX biosynthesis; coproporphyrinogen-III from 5-aminolevulinate: step 4/4. Functionally, catalyzes the decarboxylation of four acetate groups of uroporphyrinogen-III to yield coproporphyrinogen-III. This is Uroporphyrinogen decarboxylase from Burkholderia cenocepacia (strain ATCC BAA-245 / DSM 16553 / LMG 16656 / NCTC 13227 / J2315 / CF5610) (Burkholderia cepacia (strain J2315)).